The primary structure comprises 288 residues: Bifunctional protein FolD (288 aa).

NADP(+)-binding positions include 166 to 168 (GAS) and isoleucine 232.

This sequence belongs to the tetrahydrofolate dehydrogenase/cyclohydrolase family. In terms of assembly, homodimer.

The enzyme catalyses (6R)-5,10-methylene-5,6,7,8-tetrahydrofolate + NADP(+) = (6R)-5,10-methenyltetrahydrofolate + NADPH. The catalysed reaction is (6R)-5,10-methenyltetrahydrofolate + H2O = (6R)-10-formyltetrahydrofolate + H(+). It functions in the pathway one-carbon metabolism; tetrahydrofolate interconversion. Functionally, catalyzes the oxidation of 5,10-methylenetetrahydrofolate to 5,10-methenyltetrahydrofolate and then the hydrolysis of 5,10-methenyltetrahydrofolate to 10-formyltetrahydrofolate. The sequence is that of Bifunctional protein FolD from Acidithiobacillus ferrooxidans (strain ATCC 23270 / DSM 14882 / CIP 104768 / NCIMB 8455) (Ferrobacillus ferrooxidans (strain ATCC 23270)).